The chain runs to 506 residues: Dipeptide and tripeptide permease A (506 aa).

Residues 1–36 lie on the Cytoplasmic side of the membrane; sequence MSTANNNSEHPESVSLNAFKQPKAFYLIFSIELWER. The chain crosses the membrane as a helical span at residues 37–57; the sequence is FGYYGLQGIMAVYLVKMLGLS. Over 58–61 the chain is Periplasmic; sequence EADS. The helical transmembrane segment at 62-82 threads the bilayer; that stretch reads ITLFSSFSALVYGFVAIGGWL. The Cytoplasmic portion of the chain corresponds to 83–91; that stretch reads GDKVLGSKR. The next 2 helical transmembrane spans lie at 92–112 and 113–133; these read VIVL…YSGH and EIFW…LFKA. At 134-155 the chain is on the cytoplasmic side; the sequence is NPSSLLSTCYEKDDPRLDGAFT. A helical membrane pass occupies residues 156 to 176; sequence MYYMSVNIGSFLSMLATPWLA. The Periplasmic portion of the chain corresponds to 177 to 180; it reads AKYG. Residues 181-201 traverse the membrane as a helical segment; sequence WSVAFSLSVVGMLITLVNFMV. Residues 202–222 are Cytoplasmic-facing; it reads CHKWVKQHGSKPDFKPLQVKK. The chain crosses the membrane as a helical span at residues 223-243; it reads LLMVLVGVVALVALSSWLLHN. Residues 244-248 are Periplasmic-facing; the sequence is QIIAR. Residues 249-269 traverse the membrane as a helical segment; that stretch reads WALAIVSIGIVIVFAKETFAL. Residues 270 to 276 are Cytoplasmic-facing; the sequence is HGAARRK. Residues 277–297 form a helical membrane-spanning segment; sequence MIVAFLLMLEAVVFFVLYSQM. Topologically, residues 298–322 are periplasmic; that stretch reads PTSLNFFAIHNVEHNILGLAFEPEQ. Residues 323–343 form a helical membrane-spanning segment; it reads YQALNPFWIMLASPILAALYN. The Cytoplasmic portion of the chain corresponds to 344 to 354; sequence KMGDRLPMPHK. The chain crosses the membrane as a helical span at residues 355–375; that stretch reads FAFGMILCSGAFLVLPWGASF. The Periplasmic segment spans residues 376 to 385; sequence ANEQGIVSVN. Residues 386–406 traverse the membrane as a helical segment; the sequence is WLILSYALQSIGELMISGLGL. Residues 407 to 416 lie on the Cytoplasmic side of the membrane; that stretch reads AMVAQLVPQR. A helical membrane pass occupies residues 417–437; it reads LMGFIMGSWFLTTAAAALIAG. Residues 438–461 lie on the Periplasmic side of the membrane; the sequence is KVAGLTAVPGDVNDAHASLAIYSH. The helical transmembrane segment at 462 to 482 threads the bilayer; it reads VFMQIGIATAVIAILMMLTAP. Residues 483–506 are Cytoplasmic-facing; sequence KLHRMTLDTAEDTEKKAQAAAITN.

Belongs to the major facilitator superfamily. Proton-dependent oligopeptide transporter (POT/PTR) (TC 2.A.17) family. DtpA subfamily.

The protein resides in the cell inner membrane. Its function is as follows. Proton-dependent permease that transports di- and tripeptides. The protein is Dipeptide and tripeptide permease A of Serratia proteamaculans (strain 568).